Reading from the N-terminus, the 317-residue chain is Integrin-binding sialoprotein (317 aa).

Residues 1-16 form the signal peptide; the sequence is MKTALILLSILGMACA. Residues Ser31, Ser67, Ser74, Ser75, Ser94, and Ser100 each carry the phosphoserine modification. Residues 58-254 form a disordered region; the sequence is FPVQGSSDSS…RTTSPPFGKT (197 aa). Residues 66–102 are compositionally biased toward acidic residues; that stretch reads SSEENGDDSSEEEEEEEETSNEGENNEESNEDEDSEA. The N-linked (GlcNAc...) asparagine glycan is linked to Asn104. O-linked (GalNAc...) threonine glycans are attached at residues Thr119 and Thr122. The residue at position 149 (Ser149) is a Phosphoserine. Residues 149–173 show a composition bias toward acidic residues; sequence SDEEEEEEEEGNENEESEAEVDENE. Residues Asn177, Asn182, and Asn190 are each glycosylated (N-linked (GlcNAc...) asparagine). Residues 222-232 are compositionally biased toward polar residues; the sequence is KGTSKTTTSPN. 5 O-linked (GalNAc...) threonine glycosylation sites follow: Thr227, Thr228, Thr229, Thr238, and Thr239. A Phosphoserine modification is found at Ser280. Residues 286–288 carry the Integrin-binding motif motif; that stretch reads RGD. Residues Tyr313 and Tyr314 each carry the sulfotyrosine modification.

As to quaternary structure, monomer. Interacts with integrins; the interaction promotes cell adhesion. In terms of processing, N-glycosylated; glycans consist of sialylated and core-fucosylated bi-, tri- and tetraantennary chains. O-glycosylated at eight sites; mucin-type glycans contain Gal, GlcNAc, GalNAc and terminal NeuAc. In terms of tissue distribution, expressed in bone (at protein level). Expressed in trophoblast cells of placenta (at protein level). Expressed in brain.

It is found in the secreted. Its function is as follows. Binds tightly to hydroxyapatite. Appears to form an integral part of the mineralized matrix. Probably important to cell-matrix interaction. Promotes adhesion and migration of various cells via the alpha-V/beta-3 integrin receptor (ITGAV:ITGB3). The protein is Integrin-binding sialoprotein (IBSP) of Homo sapiens (Human).